Here is a 333-residue protein sequence, read N- to C-terminus: Galactinol synthase 5 (333 aa).

Residue K103 is part of the active site. 3 residues coordinate Mn(2+): D119, D121, and H257.

The protein belongs to the glycosyltransferase 8 family. Galactosyltransferase subfamily. The cofactor is a divalent metal cation.

It localises to the cytoplasm. It catalyses the reaction myo-inositol + UDP-alpha-D-galactose = alpha-D-galactosyl-(1-&gt;3)-1D-myo-inositol + UDP + H(+). Its function is as follows. Galactinol synthase involved in the biosynthesis of raffinose family oligosaccharides (RFOs) that function as osmoprotectants. May promote plant stress tolerance. This chain is Galactinol synthase 5 (GOLS5), found in Arabidopsis thaliana (Mouse-ear cress).